A 363-amino-acid chain; its full sequence is Peptide chain release factor 2 (363 aa).

Q251 is subject to N5-methylglutamine.

This sequence belongs to the prokaryotic/mitochondrial release factor family. Methylated by PrmC. Methylation increases the termination efficiency of RF2.

The protein resides in the cytoplasm. Peptide chain release factor 2 directs the termination of translation in response to the peptide chain termination codons UGA and UAA. This chain is Peptide chain release factor 2, found in Helicobacter pylori (strain Shi470).